A 368-amino-acid polypeptide reads, in one-letter code: F-box only protein 28 (368 aa).

Over residues 1-11 the composition is skewed to basic and acidic residues; that stretch reads MAAASEERMAE. A disordered region spans residues 1–56; sequence MAAASEERMAEEGGGGHGDGGSCSAAGSAQRQPPAPPSQAPPPGSQAPAAPALAPD. The segment covering 12–21 has biased composition (gly residues); it reads EGGGGHGDGG. Positions 22 to 32 are enriched in low complexity; the sequence is SCSAAGSAQRQ. Pro residues predominate over residues 33–45; that stretch reads PPAPPSQAPPPGS. Over residues 46-55 the composition is skewed to low complexity; the sequence is QAPAAPALAP. The region spanning 61–109 is the F-box domain; it reads NNTLVALPIVAIENILSFMSYDEISQLRLVCKRMDLVCQRMLNQGFLKV. 2 positions are modified to phosphoserine: Ser235 and Ser242. Thr270 carries the phosphothreonine modification. Positions 328 to 368 are disordered; that stretch reads MESAVGTSSGSGQSEESPRKRRKATEAIDSLRKSKRLRNRK. Ser344 bears the Phosphoserine mark.

Part of a SCF (SKP1-cullin-F-box) protein ligase complex.

It is found in the chromosome. Its subcellular location is the centromere. The protein resides in the kinetochore. In terms of biological role, probably recognizes and binds to some phosphorylated proteins and promotes their ubiquitination and degradation. The chain is F-box only protein 28 (Fbxo28) from Mus musculus (Mouse).